The primary structure comprises 528 residues: Chaperonin GroEL, chloroplastic (528 aa).

ATP is bound by residues 29-32, 86-90, Gly-414, 480-482, and Asp-496; these read TLGP, DGTTT, and DAA.

Belongs to the chaperonin (HSP60) family. Forms a cylinder of 14 subunits composed of two heptameric rings stacked back-to-back. Interacts with the co-chaperonin GroES.

It localises to the plastid. The protein localises to the chloroplast. It catalyses the reaction ATP + H2O + a folded polypeptide = ADP + phosphate + an unfolded polypeptide.. Together with its co-chaperonin GroES, plays an essential role in assisting protein folding. The GroEL-GroES system forms a nano-cage that allows encapsulation of the non-native substrate proteins and provides a physical environment optimized to promote and accelerate protein folding. In Pyropia yezoensis (Susabi-nori), this protein is Chaperonin GroEL, chloroplastic.